The following is a 473-amino-acid chain: Photosystem II CP43 reaction center protein (473 aa).

Residues 1–14 (MKTLYSLRRFYHVE) constitute a propeptide that is removed on maturation. The residue at position 15 (threonine 15) is an N-acetylthreonine. Threonine 15 carries the post-translational modification Phosphothreonine. A run of 5 helical transmembrane segments spans residues 69–93 (LFEV…PHLA), 134–155 (LIGP…KDKN), 178–200 (KAVW…RKIT), 255–275 (KPFA…LSYS), and 291–312 (WFNN…ASQA). Glutamate 367 is a binding site for [CaMn4O5] cluster. The chain crosses the membrane as a helical span at residues 447–471 (RARAAAAGFEKGIDRETEPVFFMNP).

Belongs to the PsbB/PsbC family. PsbC subfamily. PSII is composed of 1 copy each of membrane proteins PsbA, PsbB, PsbC, PsbD, PsbE, PsbF, PsbH, PsbI, PsbJ, PsbK, PsbL, PsbM, PsbT, PsbX, PsbY, PsbZ, Psb30/Ycf12, at least 3 peripheral proteins of the oxygen-evolving complex and a large number of cofactors. It forms dimeric complexes. The cofactor is Binds multiple chlorophylls and provides some of the ligands for the Ca-4Mn-5O cluster of the oxygen-evolving complex. It may also provide a ligand for a Cl- that is required for oxygen evolution. PSII binds additional chlorophylls, carotenoids and specific lipids..

It localises to the plastid. The protein resides in the chloroplast thylakoid membrane. One of the components of the core complex of photosystem II (PSII). It binds chlorophyll and helps catalyze the primary light-induced photochemical processes of PSII. PSII is a light-driven water:plastoquinone oxidoreductase, using light energy to abstract electrons from H(2)O, generating O(2) and a proton gradient subsequently used for ATP formation. In Staurastrum punctulatum (Green alga), this protein is Photosystem II CP43 reaction center protein.